Reading from the N-terminus, the 85-residue chain is Large ribosomal subunit protein bL27 (85 aa).

The interval 1–23 is disordered; sequence MAHKKGQGSTQNNRDSAGRRLGV.

This sequence belongs to the bacterial ribosomal protein bL27 family.

This Helicobacter hepaticus (strain ATCC 51449 / 3B1) protein is Large ribosomal subunit protein bL27.